Consider the following 242-residue polypeptide: 7-cyano-7-deazaguanine synthase (242 aa).

ATP is bound at residue Phe14 to Leu24. Zn(2+) is bound by residues Cys202, Cys217, Cys220, and Cys223.

This sequence belongs to the QueC family. Zn(2+) serves as cofactor.

It catalyses the reaction 7-carboxy-7-deazaguanine + NH4(+) + ATP = 7-cyano-7-deazaguanine + ADP + phosphate + H2O + H(+). Its pathway is purine metabolism; 7-cyano-7-deazaguanine biosynthesis. Functionally, catalyzes the ATP-dependent conversion of 7-carboxy-7-deazaguanine (CDG) to 7-cyano-7-deazaguanine (preQ(0)). In Rhodopseudomonas palustris (strain BisA53), this protein is 7-cyano-7-deazaguanine synthase.